The following is a 212-amino-acid chain: Leucine efflux protein (212 aa).

The next 6 helical transmembrane spans lie at 12–32 (TYLV…LFVL), 49–69 (GVFI…ATLI), 71–91 (TTPI…LYLG), 122–142 (ILSL…VQFI), 153–173 (FFIL…FLII), and 188–208 (LAKV…ARLA).

The protein belongs to the Rht family.

It is found in the cell inner membrane. It catalyses the reaction L-leucine(in) + H(+)(out) = L-leucine(out) + H(+)(in). In terms of biological role, exporter of leucine. This Shigella sonnei (strain Ss046) protein is Leucine efflux protein (leuE).